The following is a 134-amino-acid chain: DNA-binding protein StpA (134 aa).

Residues 73–94 form a disordered region; that stretch reads EELLGNSSAAAPRAGKKRQPRP. The DNA-binding element occupies 112-117; it reads QGRTPK.

Belongs to the histone-like protein H-NS family. As to quaternary structure, forms homodimers, can interact with H-NS. May interact with Hha and/or Cnu.

It localises to the cytoplasm. The protein resides in the nucleoid. Functionally, a DNA-binding protein that acts in a fashion similar to H-NS, repressing gene transcription. A subset of H-NS/StpA-regulated genes require auxillary proteins for repression; these auxillary proteins (Hha and other similar proteins) may also modulate oligomerization of the H-NS/StpA complex. The sequence is that of DNA-binding protein StpA (stpA) from Escherichia coli O157:H7.